The sequence spans 338 residues: Phenylalanine--tRNA ligase alpha subunit (338 aa).

Glutamate 252 contacts Mg(2+).

The protein belongs to the class-II aminoacyl-tRNA synthetase family. Phe-tRNA synthetase alpha subunit type 1 subfamily. In terms of assembly, tetramer of two alpha and two beta subunits. The cofactor is Mg(2+).

The protein resides in the cytoplasm. The enzyme catalyses tRNA(Phe) + L-phenylalanine + ATP = L-phenylalanyl-tRNA(Phe) + AMP + diphosphate + H(+). The sequence is that of Phenylalanine--tRNA ligase alpha subunit from Pseudomonas putida (strain ATCC 700007 / DSM 6899 / JCM 31910 / BCRC 17059 / LMG 24140 / F1).